Here is a 248-residue protein sequence, read N- to C-terminus: tRNA pseudouridine synthase A (248 aa).

Aspartate 53 acts as the Nucleophile in catalysis. Tyrosine 111 contacts substrate.

The protein belongs to the tRNA pseudouridine synthase TruA family. As to quaternary structure, homodimer.

The catalysed reaction is uridine(38/39/40) in tRNA = pseudouridine(38/39/40) in tRNA. In terms of biological role, formation of pseudouridine at positions 38, 39 and 40 in the anticodon stem and loop of transfer RNAs. This chain is tRNA pseudouridine synthase A, found in Listeria welshimeri serovar 6b (strain ATCC 35897 / DSM 20650 / CCUG 15529 / CIP 8149 / NCTC 11857 / SLCC 5334 / V8).